A 186-amino-acid polypeptide reads, in one-letter code: Large ribosomal subunit protein uL5 (186 aa).

The protein belongs to the universal ribosomal protein uL5 family. In terms of assembly, part of the 50S ribosomal subunit; part of the 5S rRNA/L5/L18/L25 subcomplex. Contacts the 5S rRNA and the P site tRNA. Forms a bridge to the 30S subunit in the 70S ribosome.

In terms of biological role, this is one of the proteins that bind and probably mediate the attachment of the 5S RNA into the large ribosomal subunit, where it forms part of the central protuberance. In the 70S ribosome it contacts protein S13 of the 30S subunit (bridge B1b), connecting the 2 subunits; this bridge is implicated in subunit movement. Contacts the P site tRNA; the 5S rRNA and some of its associated proteins might help stabilize positioning of ribosome-bound tRNAs. The protein is Large ribosomal subunit protein uL5 of Porphyromonas gingivalis (strain ATCC 33277 / DSM 20709 / CIP 103683 / JCM 12257 / NCTC 11834 / 2561).